The sequence spans 271 residues: Formamidopyrimidine-DNA glycosylase (271 aa).

The Schiff-base intermediate with DNA role is filled by P2. The Proton donor role is filled by E3. The active-site Proton donor; for beta-elimination activity is the K57. Residues H90, R109, and K151 each contribute to the DNA site. An FPG-type zinc finger spans residues 236-270 (HVYGRGGETCTSCGNLLSEIRLGQRTTVFCGICQT). The active-site Proton donor; for delta-elimination activity is the R260.

This sequence belongs to the FPG family. In terms of assembly, monomer. Requires Zn(2+) as cofactor.

The enzyme catalyses Hydrolysis of DNA containing ring-opened 7-methylguanine residues, releasing 2,6-diamino-4-hydroxy-5-(N-methyl)formamidopyrimidine.. It carries out the reaction 2'-deoxyribonucleotide-(2'-deoxyribose 5'-phosphate)-2'-deoxyribonucleotide-DNA = a 3'-end 2'-deoxyribonucleotide-(2,3-dehydro-2,3-deoxyribose 5'-phosphate)-DNA + a 5'-end 5'-phospho-2'-deoxyribonucleoside-DNA + H(+). Functionally, involved in base excision repair of DNA damaged by oxidation or by mutagenic agents. Acts as a DNA glycosylase that recognizes and removes damaged bases. Has a preference for oxidized purines, such as 7,8-dihydro-8-oxoguanine (8-oxoG). Has AP (apurinic/apyrimidinic) lyase activity and introduces nicks in the DNA strand. Cleaves the DNA backbone by beta-delta elimination to generate a single-strand break at the site of the removed base with both 3'- and 5'-phosphates. In Shewanella baltica (strain OS155 / ATCC BAA-1091), this protein is Formamidopyrimidine-DNA glycosylase.